A 347-amino-acid polypeptide reads, in one-letter code: GTP 3',8-cyclase (347 aa).

The Radical SAM core domain occupies 12-242 (FRPFGVLRLS…QRIDARWPLR (231 aa)). Arg19 provides a ligand contact to GTP. Positions 26 and 30 each coordinate [4Fe-4S] cluster. Tyr32 contributes to the S-adenosyl-L-methionine binding site. Cys33 serves as a coordination point for [4Fe-4S] cluster. A GTP-binding site is contributed by Arg65. Gly69 lines the S-adenosyl-L-methionine pocket. Residue Thr104 coordinates GTP. Position 129 (Ser129) interacts with S-adenosyl-L-methionine. Lys178 contributes to the GTP binding site. Met212 contacts S-adenosyl-L-methionine. Cys275 and Cys278 together coordinate [4Fe-4S] cluster. Residue 280–282 (RLR) coordinates GTP. Residue Cys292 coordinates [4Fe-4S] cluster.

This sequence belongs to the radical SAM superfamily. MoaA family. Monomer and homodimer. [4Fe-4S] cluster serves as cofactor.

It carries out the reaction GTP + AH2 + S-adenosyl-L-methionine = (8S)-3',8-cyclo-7,8-dihydroguanosine 5'-triphosphate + 5'-deoxyadenosine + L-methionine + A + H(+). The protein operates within cofactor biosynthesis; molybdopterin biosynthesis. Functionally, catalyzes the cyclization of GTP to (8S)-3',8-cyclo-7,8-dihydroguanosine 5'-triphosphate. The protein is GTP 3',8-cyclase of Synechococcus sp. (strain WH7803).